The chain runs to 344 residues: Flavonoid 7-O-methyltransferase 1A (344 aa).

D211 contacts S-adenosyl-L-methionine. H249 functions as the Proton acceptor in the catalytic mechanism.

Belongs to the class I-like SAM-binding methyltransferase superfamily. Cation-independent O-methyltransferase family. In terms of assembly, homodimer.

The enzyme catalyses apigenin + S-adenosyl-L-methionine = genkwanin + S-adenosyl-L-homocysteine + H(+). It catalyses the reaction luteolin + S-adenosyl-L-methionine = luteolin 7-methyl ether + S-adenosyl-L-homocysteine + H(+). It carries out the reaction quercetin + S-adenosyl-L-methionine = rhamnetin + S-adenosyl-L-homocysteine + H(+). The catalysed reaction is (2S)-naringenin + S-adenosyl-L-methionine = (2S)-sakuranetin + S-adenosyl-L-homocysteine + H(+). The enzyme catalyses kaempferol + S-adenosyl-L-methionine = kaempferol 7-methyl ether + S-adenosyl-L-homocysteine + H(+). It catalyses the reaction isorhamnetin + S-adenosyl-L-methionine = rhamnacene + S-adenosyl-L-homocysteine + H(+). It carries out the reaction 4',7,8-trihydroxyflavone + S-adenosyl-L-methionine = 4',8-dihydroxy-7-methoxyflavone + S-adenosyl-L-homocysteine. The catalysed reaction is scutellarein + S-adenosyl-L-methionine = scutellarein 7-methyl ether + S-adenosyl-L-homocysteine. The protein operates within flavonoid metabolism. Its function is as follows. Flavonoid 7-O-methyltransferase involved in the biosynthesis of polymethoxylated flavonoids natural products such as pebrellin, aroma compounds which contribute to the flavor of peppermint, and exhibit pharmacological activities such as anti-allergic, anti-oxidant, antibacterial, anti-proliferative, and anti-inflammatory effects. Catalyzes S-adenosylmethionine-dependent regioselective 7-O-methylation of flavonoids; active on various hydroxylated flavonoid substrates, including luteolin (LUT), quercetin, kaempferol, isorhamnetin, apigenin (API), scutellarein (6-hydroxy-apigenin, 6-OH-API, SCU), 7,8,4'-trihydroxy-flavone and naringenin (NAR), and, with a lower efficiency, 7,8,3',4'-tetrahydroxy-flavone, taxifolin, hesperetin and genistein. This chain is Flavonoid 7-O-methyltransferase 1A, found in Mentha piperita (Peppermint).